A 133-amino-acid chain; its full sequence is Snaclec A9 (133 aa).

Disulfide bonds link C4–C15, C32–C131, and C106–C123. The C-type lectin domain maps to 11–132 (YEGHCYKVFN…CGQPYRFTCE (122 aa)).

This sequence belongs to the snaclec family. Heterodimer; disulfide-linked. In terms of tissue distribution, expressed by the venom gland.

Its subcellular location is the secreted. Its function is as follows. Interferes with one step of hemostasis (modulation of platelet aggregation, or coagulation cascade, for example). This chain is Snaclec A9, found in Macrovipera lebetinus (Levantine viper).